Consider the following 505-residue polypeptide: Cytochrome P450 monooxygenase efuB (505 aa).

Residues Gly12–Tyr34 traverse the membrane as a helical segment. Residue Cys450 coordinates heme.

This sequence belongs to the cytochrome P450 family. It depends on heme as a cofactor.

The protein resides in the membrane. Its pathway is secondary metabolite biosynthesis; terpenoid biosynthesis. Functionally, cytochrome P450 monooxygenase; part of the gene cluster that mediates the biosynthesis of enfumafungin, a glycosylated fernene-type triterpenoid with potent antifungal activity, mediated by its interaction with beta-1,3-glucan synthase and the fungal cell wall. The pathway begins with the terpene cyclase-glycosyl transferase fusion protein that most likely uses 2,3-oxidosqualene as substrate and catalyzes glycosylation immediately after cyclization. The fernene glycoside then could be processed by the desaturase efuI which catalyzes isomerization of a double bond established by efuA to form the core structure. The latter would then undergo a series of hydroxylations in unknown order at C-2, C-19, C-23 and C-25, which would be catalyzed by two of the three cytochrome P450 monooxygenases efuB, efuG or efuH. The hydroxy-group at C-25 becomes oxidized by the dehydrogenase efuE to enable a spontaneous, non-enzymatic hemiacetal formation with C-23. After hydroxylation at C-2, acetylation by the acetyltransferase efuC takes place. The final steps in enfumafungin biosynthesis require expansion of the 5-membered ring by lactonization via a Baeyer-Villiger reaction mediated by one of the BGC's cytochrome P450 monooxygenases (efuB, efuG or efuH) followed by ring cleavage. This type of reaction would establish a double bond between C-20 and C-21 which could be reduced by the reductase efuL to form the final product. In Hormonema carpetanum, this protein is Cytochrome P450 monooxygenase efuB.